Here is a 640-residue protein sequence, read N- to C-terminus: 1-deoxy-D-xylulose-5-phosphate synthase (640 aa).

Thiamine diphosphate-binding positions include histidine 72 and 113 to 115; that span reads GHA. Aspartate 144 contributes to the Mg(2+) binding site. Residues 145–146, asparagine 174, tyrosine 287, and glutamate 370 contribute to the thiamine diphosphate site; that span reads GA. Residue asparagine 174 coordinates Mg(2+).

This sequence belongs to the transketolase family. DXPS subfamily. Homodimer. It depends on Mg(2+) as a cofactor. Requires thiamine diphosphate as cofactor.

The catalysed reaction is D-glyceraldehyde 3-phosphate + pyruvate + H(+) = 1-deoxy-D-xylulose 5-phosphate + CO2. It functions in the pathway metabolic intermediate biosynthesis; 1-deoxy-D-xylulose 5-phosphate biosynthesis; 1-deoxy-D-xylulose 5-phosphate from D-glyceraldehyde 3-phosphate and pyruvate: step 1/1. Its function is as follows. Catalyzes the acyloin condensation reaction between C atoms 2 and 3 of pyruvate and glyceraldehyde 3-phosphate to yield 1-deoxy-D-xylulose-5-phosphate (DXP). This chain is 1-deoxy-D-xylulose-5-phosphate synthase, found in Synechocystis sp. (strain ATCC 27184 / PCC 6803 / Kazusa).